Consider the following 493-residue polypeptide: Glutamyl-tRNA(Gln) amidotransferase subunit A (493 aa).

Catalysis depends on charge relay system residues K78 and S158. The active-site Acyl-ester intermediate is S182.

This sequence belongs to the amidase family. GatA subfamily. Heterotrimer of A, B and C subunits.

The enzyme catalyses L-glutamyl-tRNA(Gln) + L-glutamine + ATP + H2O = L-glutaminyl-tRNA(Gln) + L-glutamate + ADP + phosphate + H(+). Functionally, allows the formation of correctly charged Gln-tRNA(Gln) through the transamidation of misacylated Glu-tRNA(Gln) in organisms which lack glutaminyl-tRNA synthetase. The reaction takes place in the presence of glutamine and ATP through an activated gamma-phospho-Glu-tRNA(Gln). The sequence is that of Glutamyl-tRNA(Gln) amidotransferase subunit A from Azorhizobium caulinodans (strain ATCC 43989 / DSM 5975 / JCM 20966 / LMG 6465 / NBRC 14845 / NCIMB 13405 / ORS 571).